Here is a 268-residue protein sequence, read N- to C-terminus: 4-hydroxy-tetrahydrodipicolinate reductase (268 aa).

Residues Gly9–Met14, Glu35, Gly99–Thr101, and Ala123–Tyr126 each bind NAD(+). His156 serves as the catalytic Proton donor/acceptor. His157 contacts (S)-2,3,4,5-tetrahydrodipicolinate. Lys160 functions as the Proton donor in the catalytic mechanism. A (S)-2,3,4,5-tetrahydrodipicolinate-binding site is contributed by Gly166–Thr167.

Belongs to the DapB family.

It is found in the cytoplasm. It catalyses the reaction (S)-2,3,4,5-tetrahydrodipicolinate + NAD(+) + H2O = (2S,4S)-4-hydroxy-2,3,4,5-tetrahydrodipicolinate + NADH + H(+). It carries out the reaction (S)-2,3,4,5-tetrahydrodipicolinate + NADP(+) + H2O = (2S,4S)-4-hydroxy-2,3,4,5-tetrahydrodipicolinate + NADPH + H(+). Its pathway is amino-acid biosynthesis; L-lysine biosynthesis via DAP pathway; (S)-tetrahydrodipicolinate from L-aspartate: step 4/4. Catalyzes the conversion of 4-hydroxy-tetrahydrodipicolinate (HTPA) to tetrahydrodipicolinate. The chain is 4-hydroxy-tetrahydrodipicolinate reductase from Magnetococcus marinus (strain ATCC BAA-1437 / JCM 17883 / MC-1).